We begin with the raw amino-acid sequence, 20 residues long: ANNAGARKAIRKIEARTEVN.

It belongs to the bacterial ribosomal protein bS20 family.

Functionally, binds directly to 16S ribosomal RNA. This chain is Small ribosomal subunit protein bS20 (rpsT), found in Brevundimonas diminuta (Pseudomonas diminuta).